We begin with the raw amino-acid sequence, 410 residues long: Lipoyl synthase, mitochondrial (410 aa).

Residues Cys134, Cys139, Cys145, Cys165, Cys169, Cys172, and Ser390 each contribute to the [4Fe-4S] cluster site. Residues Ala148 to Leu379 enclose the Radical SAM core domain.

This sequence belongs to the radical SAM superfamily. Lipoyl synthase family. Requires [4Fe-4S] cluster as cofactor.

It localises to the mitochondrion. It catalyses the reaction [[Fe-S] cluster scaffold protein carrying a second [4Fe-4S](2+) cluster] + N(6)-octanoyl-L-lysyl-[protein] + 2 oxidized [2Fe-2S]-[ferredoxin] + 2 S-adenosyl-L-methionine + 4 H(+) = [[Fe-S] cluster scaffold protein] + N(6)-[(R)-dihydrolipoyl]-L-lysyl-[protein] + 4 Fe(3+) + 2 hydrogen sulfide + 2 5'-deoxyadenosine + 2 L-methionine + 2 reduced [2Fe-2S]-[ferredoxin]. Its pathway is protein modification; protein lipoylation via endogenous pathway; protein N(6)-(lipoyl)lysine from octanoyl-[acyl-carrier-protein]: step 2/2. Its function is as follows. Catalyzes the radical-mediated insertion of two sulfur atoms into the C-6 and C-8 positions of the octanoyl moiety bound to the lipoyl domains of lipoate-dependent enzymes, thereby converting the octanoylated domains into lipoylated derivatives. The protein is Lipoyl synthase, mitochondrial of Schistosoma mansoni (Blood fluke).